The primary structure comprises 318 residues: Pantothenate kinase (318 aa).

96-103 (GSVAVGKS) is a binding site for ATP.

It belongs to the prokaryotic pantothenate kinase family.

The protein localises to the cytoplasm. The catalysed reaction is (R)-pantothenate + ATP = (R)-4'-phosphopantothenate + ADP + H(+). The protein operates within cofactor biosynthesis; coenzyme A biosynthesis; CoA from (R)-pantothenate: step 1/5. The polypeptide is Pantothenate kinase (Coxiella burnetii (strain Dugway 5J108-111)).